Reading from the N-terminus, the 134-residue chain is U34-theraphotoxin-Cg1a (134 aa).

An N-terminal signal peptide occupies residues 1–19 (MKLAVVFLLTTVVFTLAQS). 3 disulfide bridges follow: C24–C35, C29–C53, and C63–C84. Residues 97 to 134 (EQSSTSTSSTQGPITSSTVTTQSEATTETETTTAAEGK) are disordered. Residues 99-134 (SSTSTSSTQGPITSSTVTTQSEATTETETTTAAEGK) show a composition bias toward low complexity.

This sequence belongs to the neurotoxin 32 family. As to expression, expressed by the venom gland.

It is found in the secreted. This chain is U34-theraphotoxin-Cg1a, found in Chilobrachys guangxiensis (Chinese earth tiger tarantula).